The primary structure comprises 638 residues: 1-deoxy-D-xylulose-5-phosphate synthase (638 aa).

Residues His-71 and 112 to 114 contribute to the thiamine diphosphate site; that span reads SHA. A Mg(2+)-binding site is contributed by Asp-144. Thiamine diphosphate is bound by residues 145–146, Asn-173, Tyr-284, and Glu-365; that span reads GA. Asn-173 serves as a coordination point for Mg(2+).

The protein belongs to the transketolase family. DXPS subfamily. In terms of assembly, homodimer. The cofactor is Mg(2+). Thiamine diphosphate is required as a cofactor.

It carries out the reaction D-glyceraldehyde 3-phosphate + pyruvate + H(+) = 1-deoxy-D-xylulose 5-phosphate + CO2. Its pathway is metabolic intermediate biosynthesis; 1-deoxy-D-xylulose 5-phosphate biosynthesis; 1-deoxy-D-xylulose 5-phosphate from D-glyceraldehyde 3-phosphate and pyruvate: step 1/1. Its function is as follows. Catalyzes the acyloin condensation reaction between C atoms 2 and 3 of pyruvate and glyceraldehyde 3-phosphate to yield 1-deoxy-D-xylulose-5-phosphate (DXP). This Mycobacterium sp. (strain KMS) protein is 1-deoxy-D-xylulose-5-phosphate synthase.